Here is a 198-residue protein sequence, read N- to C-terminus: CXXC-type zinc finger protein 4 (198 aa).

Residues 114 to 134 (NHSSSSSSSSGGAGGANPAKK) are disordered. A CXXC-type zinc finger spans residues 132 to 173 (AKKKRKRCGVCVPCKRLINCGVCSSCRNRKTGHQICKFRKCE). Residues cysteine 139, cysteine 142, cysteine 145, cysteine 151, cysteine 154, and cysteine 157 each contribute to the Zn(2+) site. An interaction with DVL1 region spans residues 161-166 (KTGHQI). 2 residues coordinate Zn(2+): cysteine 167 and cysteine 172.

Interacts with the PDZ domain of DVL1.

It is found in the cytoplasm. Acts as a negative regulator of the Wnt signaling pathway via its interaction with DVL1. Binds preferentially to DNA containing cytidine-phosphate-guanosine (CpG) dinucleotides over CpH (H=A, T, and C), hemimethylated-CpG and hemimethylated-hydroxymethyl-CpG. The sequence is that of CXXC-type zinc finger protein 4 (CXXC4) from Homo sapiens (Human).